A 549-amino-acid chain; its full sequence is Arginine--tRNA ligase (549 aa).

A 'HIGH' region motif is present at residues 132–142 (ANPTGPLHLAH).

The protein belongs to the class-I aminoacyl-tRNA synthetase family. As to quaternary structure, monomer.

It localises to the cytoplasm. The catalysed reaction is tRNA(Arg) + L-arginine + ATP = L-arginyl-tRNA(Arg) + AMP + diphosphate. This Renibacterium salmoninarum (strain ATCC 33209 / DSM 20767 / JCM 11484 / NBRC 15589 / NCIMB 2235) protein is Arginine--tRNA ligase.